The sequence spans 209 residues: Small ribosomal subunit protein uS4 (209 aa).

The S4 RNA-binding domain occupies 98–166 (RRLDNVVYRL…IKQAIELNKG (69 aa)).

The protein belongs to the universal ribosomal protein uS4 family. Part of the 30S ribosomal subunit. Contacts protein S5. The interaction surface between S4 and S5 is involved in control of translational fidelity.

Functionally, one of the primary rRNA binding proteins, it binds directly to 16S rRNA where it nucleates assembly of the body of the 30S subunit. In terms of biological role, with S5 and S12 plays an important role in translational accuracy. This chain is Small ribosomal subunit protein uS4, found in Fervidobacterium nodosum (strain ATCC 35602 / DSM 5306 / Rt17-B1).